The following is a 454-amino-acid chain: Mitochondrial dynamics protein MID49 (454 aa).

Residues 1-22 are Mitochondrial intermembrane-facing; the sequence is MAEFSQKQRKQSGSEGLGSVVD. The chain crosses the membrane as a helical span at residues 23 to 43; sequence FLLANARLVLGVGGAAVLGIA. Topologically, residues 44 to 454 are cytoplasmic; sequence TLAVKRLIDR…SGLQVPESLF (411 aa). The tract at residues 76–113 is disordered; the sequence is ATSPQKPQPPPAAFSQPLATGSPSPSVPVEPTPIHSPT.

It belongs to the MID49/MID51 family. In terms of assembly, interacts with DNM1L.

It localises to the mitochondrion outer membrane. In terms of biological role, mitochondrial outer membrane protein which regulates mitochondrial organization. It is required for mitochondrial fission and promotes the recruitment and association of the fission mediator dynamin-related protein 1 (DNM1L) to the mitochondrial surface independently of the mitochondrial fission FIS1 and MFF proteins. Regulates DNM1L GTPase activity. This is Mitochondrial dynamics protein MID49 (Mief2) from Mus musculus (Mouse).